The sequence spans 301 residues: D-alanine--D-alanine ligase A (301 aa).

Residues 96–290 (KKILRYEGVE…YSKLLDMIIE (195 aa)) form the ATP-grasp domain. An ATP-binding site is contributed by 123-178 (LDKLGFPLVVKPNSGGSSVGVKIVYNKNELISMLETVFEWDSEVVIEKYIKGDEIT). 3 residues coordinate Mg(2+): aspartate 245, glutamate 257, and asparagine 259.

This sequence belongs to the D-alanine--D-alanine ligase family. Requires Mg(2+) as cofactor. It depends on Mn(2+) as a cofactor.

The protein localises to the cytoplasm. It carries out the reaction 2 D-alanine + ATP = D-alanyl-D-alanine + ADP + phosphate + H(+). Its pathway is cell wall biogenesis; peptidoglycan biosynthesis. In terms of biological role, cell wall formation. This chain is D-alanine--D-alanine ligase A, found in Bacillus cereus (strain ATCC 14579 / DSM 31 / CCUG 7414 / JCM 2152 / NBRC 15305 / NCIMB 9373 / NCTC 2599 / NRRL B-3711).